Here is a 203-residue protein sequence, read N- to C-terminus: dITP/XTP pyrophosphatase (203 aa).

9–14 (SSNAGK) serves as a coordination point for substrate. Positions 42 and 72 each coordinate Mg(2+). The active-site Proton acceptor is D72. Substrate contacts are provided by residues S73, 161 to 164 (FGYD), K184, and 189 to 190 (HR).

The protein belongs to the HAM1 NTPase family. In terms of assembly, homodimer. The cofactor is Mg(2+).

It catalyses the reaction XTP + H2O = XMP + diphosphate + H(+). The catalysed reaction is dITP + H2O = dIMP + diphosphate + H(+). The enzyme catalyses ITP + H2O = IMP + diphosphate + H(+). Functionally, pyrophosphatase that catalyzes the hydrolysis of nucleoside triphosphates to their monophosphate derivatives, with a high preference for the non-canonical purine nucleotides XTP (xanthosine triphosphate), dITP (deoxyinosine triphosphate) and ITP. Seems to function as a house-cleaning enzyme that removes non-canonical purine nucleotides from the nucleotide pool, thus preventing their incorporation into DNA/RNA and avoiding chromosomal lesions. The polypeptide is dITP/XTP pyrophosphatase (Acidobacterium capsulatum (strain ATCC 51196 / DSM 11244 / BCRC 80197 / JCM 7670 / NBRC 15755 / NCIMB 13165 / 161)).